A 30-amino-acid chain; its full sequence is Trypsin inhibitor 3 (30 aa).

3 cysteine pairs are disulfide-bonded: Cys-4-Cys-21, Cys-11-Cys-23, and Cys-17-Cys-29.

Belongs to the protease inhibitor I7 (squash-type serine protease inhibitor) family.

It localises to the secreted. Inhibits lysyl endopeptidase and trypsin. In Cucumis melo var. conomon (Oriental pickling melon), this protein is Trypsin inhibitor 3.